The sequence spans 663 residues: Ras and EF-hand domain-containing protein (663 aa).

EF-hand domains lie at 1-33 (MNHA…CREL) and 35-70 (VPAD…VSEA). Asp14, Asn16, Ser18, Arg20, Asp25, Asp48, Asp50, Asp52, Tyr54, and Asp59 together coordinate Ca(2+). Residues 122 to 297 (ELLLQQFEDL…LKKMVMEFQS (176 aa)) are a coiled coil. A compositionally biased stretch (polar residues) spans 324 to 336 (SQENASTKRQLSP). The tract at residues 324 to 343 (SQENASTKRQLSPRNEVLPR) is disordered. GTP is bound by residues 477-482 (GSGKSS), 580-583 (NKVD), and 615-616 (AK).

The protein belongs to the small GTPase superfamily. Rab family. In terms of assembly, homodimer.

Its subcellular location is the cytoplasm. It localises to the perinuclear region. Functionally, binds predominantly GDP, and also GTP. This is Ras and EF-hand domain-containing protein (rasef) from Danio rerio (Zebrafish).